The sequence spans 664 residues: SPARC-like protein 1 (664 aa).

The N-terminal stretch at 1-16 is a signal peptide; the sequence is MKTGLFFLCLLGTAAA. The interval 25-34 is O-glycosylated at one additional site; the sequence is SDHSKPTAET. The segment at 28 to 360 is disordered; it reads SKPTAETVAP…DGPRHSASDD (333 aa). Residues Thr31 and Thr40 are each glycosylated (O-linked (GalNAc...) threonine). O-linked (GalNAc...) serine glycosylation occurs at Ser44. Basic and acidic residues predominate over residues 62–84; the sequence is DDSHHKAEKSSVLKSKEESHEQS. Phosphoserine occurs at positions 76, 84, and 92. Residues 85-94 show a composition bias toward polar residues; sequence AEQGKSSSQE. Residues 96–105 are compositionally biased toward basic and acidic residues; that stretch reads GLKDQEDSDG. O-linked (GalNAc...) threonine glycosylation is present at Thr116. Residues 120-136 show a composition bias toward basic and acidic residues; the sequence is LDIKEDMSEPQEKKLSE. Polar residues predominate over residues 146-156; it reads SSFTDSNQQES. Residue Asn169 is glycosylated (N-linked (GlcNAc...) asparagine). Basic residues predominate over residues 170–180; that stretch reads YSHHQLNRSSK. Ser171 carries the post-translational modification Phosphoserine. 2 N-linked (GlcNAc...) asparagine glycosylation sites follow: Asn176 and Asn196. Positions 188–199 are enriched in polar residues; the sequence is QGNQEQDPNISN. Residues 216 to 235 are compositionally biased toward basic and acidic residues; sequence DNQERKTELPREHANSKQEE. 2 stretches are compositionally biased toward acidic residues: residues 236 to 248 and 259 to 280; these read DNTQ…EESD and DEFD…EEEN. A Phosphoserine modification is found at Ser272. N-linked (GlcNAc...) asparagine glycosylation occurs at Asn280. Residues 306-316 are compositionally biased toward basic and acidic residues; it reads SNHKETEEKTV. Residue Thr331 is glycosylated (O-linked (GalNAc...) threonine). The span at 339–349 shows a compositional bias: acidic residues; the sequence is DDGDDDGDDGG. Residues Ser358 and Ser365 each carry the phosphoserine modification. Residues 388–426 form a disordered region; it reads EKVHENENIGTTEPGEHQEAKKAENSSNEEETSSEGNMR. O-linked (GalNAc...) threonine glycosylation is present at Thr398. Basic and acidic residues predominate over residues 401–411; the sequence is PGEHQEAKKAE. Asn412 carries an N-linked (GlcNAc...) asparagine glycan. Ser420 is subject to Phosphoserine. The Follistatin-like domain maps to 432–454; it reads SCMSFQCKRGHICKADQQGKPHC. Disulfide bonds link Cys433/Cys444, Cys438/Cys454, Cys456/Cys490, Cys462/Cys483, Cys472/Cys509, Cys515/Cys626, and Cys634/Cys650. The 62-residue stretch at 450–511 folds into the Kazal-like domain; sequence GKPHCVCQDP…QLDYFGACKS (62 aa). Residue Asn476 is glycosylated (N-linked (GlcNAc...) asparagine). The 36-residue stretch at 622–657 folds into the EF-hand domain; the sequence is PMEHCITRFFEECDPNKDKHITLKEWGHCFGIKEED. Ca(2+) contacts are provided by Asp635, Asn637, Asp639, His641, and Glu646.

This sequence belongs to the SPARC family. N- and O-glycosylated. O-glycosylated with a core 1 or possibly core 8 glycan. In terms of tissue distribution, highly expressed in lymph node, brain, heart, lung, skeletal muscle, ovary, small intestine, and colon, with lower levels in placenta, pancreas, testis, spleen, and thymus, and no expression in kidney, liver, and peripheral blood leukocytes.

It is found in the secreted. The protein resides in the extracellular space. It localises to the extracellular matrix. The sequence is that of SPARC-like protein 1 (SPARCL1) from Homo sapiens (Human).